The primary structure comprises 118 residues: UPF0295 protein BcerKBAB4_0454 (118 aa).

2 helical membrane-spanning segments follow: residues 12–32 and 43–63; these read IRTF…LGVF and FMMV…WIGM.

This sequence belongs to the UPF0295 family.

The protein resides in the cell membrane. This chain is UPF0295 protein BcerKBAB4_0454, found in Bacillus mycoides (strain KBAB4) (Bacillus weihenstephanensis).